Consider the following 930-residue polypeptide: F-box only protein 11 (930 aa).

Residues 1–150 (MNSVRAANRR…RVSGKSQDLS (150 aa)) are disordered. Positions 7–16 (ANRRPRRVSR) are enriched in basic residues. The segment covering 17–27 (PRPVQQQQQQP) has biased composition (low complexity). Residues 28 to 73 (PQQPPPQPPQQQPPPQPPQQPPQQQPPPPPQQQPPPPPPPPPPPPQ) are compositionally biased toward pro residues. A compositionally biased stretch (polar residues) spans 117 to 132 (PTKSSMEGASTSTTEN). In terms of domain architecture, F-box spans 156–202 (QYLQEKLPDEVVLKIFSYLLEQDLCRAACVCKRFSELANDPILWKRL). PbH1 repeat units lie at residues 398 to 420 (GACP…YITD), 421 to 443 (HAQG…WVKN), 444 to 466 (HGNP…FTFD), 467 to 489 (HGMG…EVKA), 490 to 512 (YANP…YVHE), 513 to 535 (KGRG…WITS), 536 to 558 (NSDP…YIFG), 559 to 581 (DGRG…QIRT), 582 to 604 (NSCP…YVHE), 605 to 627 (KGQG…WVTT), 628 to 650 (GSTP…YFYD), 651 to 673 (NGHG…QIRT), 674 to 696 (GSNP…LVYN), 697 to 719 (SGLG…WIKT), 720 to 742 (DSNP…CIFN), 743 to 765 (GGRG…LIST), 766 to 788 (NSHP…EITN), 789 to 811 (HATA…FLAS), and 812 to 833 (GVNV…EKAV). The segment at 836–907 (GQCLYKISSY…LSNPCTLAGE (72 aa)) adopts a UBR-type zinc-finger fold.

Component of the SCF(FBXO11) complex consisting of CUL1, RBX1, SKP1 and FBXO11. Interacts with CIITA. In terms of tissue distribution, at 9.5 dpc and 10.5 dpc, expression is restricted to developing heart tissue. By 11.5 dpc and 12.5 dpc, detected in liver and subsequently in muscle by 13.5 dpc. At 14.5 dpc, still detected in heart, liver and muscle and also in the developing secondary palate including the nasal, medial and oral epithelia of the palatal shelves. At 15.5 dpc and 16.5 dpc, expressed in lung, kidney, heart, liver, muscle and adrenal gland. At this time, fusion of the palate shelves has occurred, with expression confined to the nasal and oral epithelia. At 17.5 dpc, expression in the lung is confined to bronchial epithelial cells and is evident in bone marrow, skin, tissue macrophages, osteoblasts, kidney, liver and spleen. At 18.5 dpc, expressed in bone marrow, liver, kidney and muscle but decreases in heart and lung. At this time, first detected in the middle ear epithelium. At the newborn stage, expression is strong in the middle ear where it is confined to mucin-secreting cells, as well as persisting in bone marrow, kidney and liver. Middle ear expression persists in postnatal head tissue at 4 and 13 days after birth and has declined by 21 days after birth. In the adult, expression is seen in alveolar macrophages of the lung, glomeruli and collecting tubules of the kidney, midbrain, heart and muscle.

The protein localises to the nucleus. It localises to the chromosome. It functions in the pathway protein modification; protein ubiquitination. Its function is as follows. Substrate recognition component of a SCF (SKP1-CUL1-F-box protein) E3 ubiquitin-protein ligase complex which mediates the ubiquitination and subsequent proteasomal degradation of target proteins, such as DTL/CDT2, BCL6, SNAI1 and PRDM1/BLIMP1. The SCF(FBXO11) complex mediates ubiquitination and degradation of BCL6, thereby playing a role in the germinal center B-cells terminal differentiation toward memory B-cells and plasma cells. The SCF(FBXO11) complex also mediates ubiquitination and degradation of DTL, an important step for the regulation of TGF-beta signaling, cell migration and the timing of the cell-cycle progression and exit. The SCF(FBXO11) complex also catalyzes ubiquitination and degradation of GSK3B-phosphorylated SNAI1. Binds to and neddylates phosphorylated p53/TP53, inhibiting its transcriptional activity. Plays a role in the regulatiom of erythropoiesis but not myelopoiesis or megakaryopoiesis. Mechanistically, activates erythroid genes by mediating the degradation of BAHD1, a heterochromatin-associated protein that recruits corepressors to H3K27me3 marks. Participates in macrophage cell death and inflammation in response to bacterial toxins by regulating the expression of complement 5a receptor 1/C5AR1 and IL-1beta. Acts as a critical regulator to determine the level of MHC-II by mediating the recognition of degron at the P/S/T domain of CIITA leading to its ubiquitination and subsequent degradation via the proteasome. Participates in the antiviral repsonse by initiating the activation of TBK1-IRF3-IFN-I axis. Mediates the 'Lys-63'-linked ubiquitination of TRAF3 to strengthen the interaction between TRAF3 and TBK1. In Mus musculus (Mouse), this protein is F-box only protein 11.